We begin with the raw amino-acid sequence, 92 residues long: Large ribosomal subunit protein eL31 (92 aa).

The protein belongs to the eukaryotic ribosomal protein eL31 family.

This chain is Large ribosomal subunit protein eL31, found in Pyrobaculum arsenaticum (strain DSM 13514 / JCM 11321 / PZ6).